A 257-amino-acid polypeptide reads, in one-letter code: Phosphate import ATP-binding protein PstB (257 aa).

Positions 11–252 (IQVRNLNFYY…PAKKQTEDYI (242 aa)) constitute an ABC transporter domain. 43-50 (GPSGCGKS) provides a ligand contact to ATP.

The protein belongs to the ABC transporter superfamily. Phosphate importer (TC 3.A.1.7) family. In terms of assembly, the complex is composed of two ATP-binding proteins (PstB), two transmembrane proteins (PstC and PstA) and a solute-binding protein (PstS).

Its subcellular location is the cell inner membrane. The catalysed reaction is phosphate(out) + ATP + H2O = ADP + 2 phosphate(in) + H(+). Part of the ABC transporter complex PstSACB involved in phosphate import. Responsible for energy coupling to the transport system. The polypeptide is Phosphate import ATP-binding protein PstB (Escherichia coli O6:K15:H31 (strain 536 / UPEC)).